Consider the following 151-residue polypeptide: Large ribosomal subunit protein bL17 (151 aa).

Positions Glu-118–Asp-151 are disordered. Low complexity predominate over residues Pro-131–Ala-144.

This sequence belongs to the bacterial ribosomal protein bL17 family. Part of the 50S ribosomal subunit. Contacts protein L32.

The polypeptide is Large ribosomal subunit protein bL17 (Syntrophobacter fumaroxidans (strain DSM 10017 / MPOB)).